A 486-amino-acid chain; its full sequence is Surface lipoprotein assembly modifier (486 aa).

Residues 1-29 form the signal peptide; that stretch reads MKNGVKQISFLSLIGLSLIGLSLTNIAWA. The tract at residues 30–197 is N-terminal domain; the sequence is KVARPKNDTL…QYLLTLNQRN (168 aa). The C-terminal probable beta barrel stretch occupies residues 198–486; sequence QWIWQVGLNF…RIYLEIGKIF (289 aa). Transmembrane regions (beta stranded) follow at residues 199–209, 237–248, 253–262, 276–286, 290–300, 320–330, 334–344, 358–367, 373–382, 395–404, 409–419, 437–446, 453–463, and 476–486; these read WIWQVGLNFLN, GRVFFISRKKWP, FFSKTMFNGN, TLRIGGGLGYQ, VEVSLFPFQEK, LGIRLENVDWL, WQISTALEYGE, YFISSTLFYL, FWFVGMDFHR, KTLRLGWGQD, ISSRLTFSYAN, YATTITLWHR, LTPKLSWDYQK, and NRIYLEIGKIF.

Belongs to the Slam family.

Its subcellular location is the cell outer membrane. Its function is as follows. Required for correct export to the cell surface of some cell outer membrane lipoproteins (tested with TpbP) upon heterologous expression in E.coli and probably also in Haemophilus. In Haemophilus influenzae (strain 86-028NP), this protein is Surface lipoprotein assembly modifier.